Here is a 377-residue protein sequence, read N- to C-terminus: Methylthioribose-1-phosphate isomerase (377 aa).

The Proton donor role is filled by Asp-254.

It belongs to the eIF-2B alpha/beta/delta subunits family. MtnA subfamily.

Its subcellular location is the cytoplasm. It is found in the nucleus. It catalyses the reaction 5-(methylsulfanyl)-alpha-D-ribose 1-phosphate = 5-(methylsulfanyl)-D-ribulose 1-phosphate. The protein operates within amino-acid biosynthesis; L-methionine biosynthesis via salvage pathway; L-methionine from S-methyl-5-thio-alpha-D-ribose 1-phosphate: step 1/6. Catalyzes the interconversion of methylthioribose-1-phosphate (MTR-1-P) into methylthioribulose-1-phosphate (MTRu-1-P). The protein is Methylthioribose-1-phosphate isomerase (mri1) of Aspergillus terreus (strain NIH 2624 / FGSC A1156).